The following is a 244-amino-acid chain: Methylthioribulose-1-phosphate dehydratase (244 aa).

Residue Cys89 coordinates substrate. Zn(2+)-binding residues include His107 and His109. Glu130 serves as the catalytic Proton donor/acceptor. Position 192 (His192) interacts with Zn(2+).

Belongs to the aldolase class II family. MtnB subfamily. Requires Zn(2+) as cofactor.

It is found in the cytoplasm. It catalyses the reaction 5-(methylsulfanyl)-D-ribulose 1-phosphate = 5-methylsulfanyl-2,3-dioxopentyl phosphate + H2O. Its pathway is amino-acid biosynthesis; L-methionine biosynthesis via salvage pathway; L-methionine from S-methyl-5-thio-alpha-D-ribose 1-phosphate: step 2/6. Functionally, catalyzes the dehydration of methylthioribulose-1-phosphate (MTRu-1-P) into 2,3-diketo-5-methylthiopentyl-1-phosphate (DK-MTP-1-P). The sequence is that of Methylthioribulose-1-phosphate dehydratase from Saccharomyces cerevisiae (strain YJM789) (Baker's yeast).